We begin with the raw amino-acid sequence, 1036 residues long: Protein CLEC16A (1036 aa).

The region spanning 51–198 is the FPL domain; it reads IRSITEILIW…AVRTITLNVY (148 aa). Disordered stretches follow at residues 375–416, 437–458, 876–967, and 1008–1036; these read SLEM…DAEK, GTSV…NSEN, HSSP…PSLL, and SQLP…PTEH. Positions 381 to 392 are enriched in basic residues; the sequence is HKGKKRMQKRPN. Low complexity-rich tracts occupy residues 877-891, 898-923, and 943-954; these read SSPS…FASG, STSH…APTT, and NSKPSKNSSARS.

This sequence belongs to the CLEC16A/gop-1 family. As to quaternary structure, interacts with RNF41/NRDP1. In terms of tissue distribution, ubiquitously expressed. Expressed in pancreatic islets.

Its subcellular location is the endosome membrane. It is found in the lysosome membrane. In terms of biological role, regulator of mitophagy through the upstream regulation of the RNF41/NRDP1-PRKN pathway. Mitophagy is a selective form of autophagy necessary for mitochondrial quality control. The RNF41/NRDP1-PRKN pathway regulates autophagosome-lysosome fusion during late mitophagy. May protect RNF41/NRDP1 from proteasomal degradation, RNF41/NRDP1 which regulates proteasomal degradation of PRKN. Plays a key role in beta cells functions by regulating mitophagy/autophagy and mitochondrial health. The protein is Protein CLEC16A of Mus musculus (Mouse).